The chain runs to 446 residues: Coagulation factor VII (446 aa).

A signal peptide spans 1–24; that stretch reads MVPQTHGLLLLYFLLQLQGPLGAV. Positions 25–41 are excised as a propeptide; it reads VFITQEEAHGVLHRQRR. In terms of domain architecture, Gla spans 42–86; that stretch reads ANSLLEELWSSSLERECNEERCSFEEAREIFKSPERTKQFWTIYS. Residues glutamate 47, glutamate 48, glutamate 55, glutamate 57, glutamate 60, glutamate 61, glutamate 66, glutamate 67, glutamate 70, and glutamate 76 each carry the 4-carboxyglutamate modification. A disulfide bond links cysteine 58 and cysteine 63. Residues 87 to 123 enclose the EGF-like 1; calcium-binding domain; it reads DGDQCASNPCQNGGTCQDHLKSYVCFCPLDFEGRNCE. Disulfide bonds link cysteine 91–cysteine 102, cysteine 96–cysteine 111, cysteine 113–cysteine 122, cysteine 132–cysteine 143, cysteine 139–cysteine 153, cysteine 155–cysteine 168, cysteine 176–cysteine 303, cysteine 200–cysteine 205, cysteine 219–cysteine 235, and cysteine 351–cysteine 370. The O-linked (Glc...) serine; alternate glycan is linked to serine 93. Residue serine 93 is glycosylated (O-linked (Xyl...) serine; alternate). The O-linked (Fuc) threonine glycan is linked to threonine 101. Position 104 is a (3R)-3-hydroxyaspartate (aspartate 104). Residues 128–169 form the EGF-like 2 domain; it reads EQLICANENGDCDQYCRDHVGTKRTCSCHEDYVLQPDEVSCK. Asparagine 186 carries an N-linked (GlcNAc...) asparagine glycan. The Peptidase S1 domain occupies 194-433; that stretch reads IVGGYVCPKG…YIDWLVKYMD (240 aa). The active-site Charge relay system is histidine 234. N-linked (GlcNAc...) asparagine glycosylation is present at asparagine 244. The active-site Charge relay system is aspartate 283. Position 379 (aspartate 379) interacts with substrate. Cysteine 381 and cysteine 409 are oxidised to a cystine. The Charge relay system role is filled by serine 385.

The protein belongs to the peptidase S1 family. In terms of assembly, heterodimer of a light chain and a heavy chain linked by a disulfide bond. Post-translationally, the vitamin K-dependent, enzymatic carboxylation of some glutamate residues allows the modified protein to bind calcium. The iron and 2-oxoglutarate dependent 3-hydroxylation of aspartate and asparagine is (R) stereospecific within EGF domains. In terms of processing, can be either O-glucosylated or O-xylosylated at Ser-93 by POGLUT1. Plasma.

The protein localises to the secreted. The enzyme catalyses Selective cleavage of Arg-|-Ile bond in factor X to form factor Xa.. Initiates the extrinsic pathway of blood coagulation. Serine protease that circulates in the blood in a zymogen form. Factor VII is converted to factor VIIa by factor Xa, factor XIIa, factor IXa, or thrombin by minor proteolysis. In the presence of tissue factor and calcium ions, factor VIIa then converts factor X to factor Xa by limited proteolysis. Factor VIIa also converts factor IX to factor IXa in the presence of tissue factor and calcium. In Rattus norvegicus (Rat), this protein is Coagulation factor VII (F7).